The primary structure comprises 312 residues: MRNSTAVTDFILLGLTSDPQWQVVLFIFLLVTYMLSVTGNLIIITLTLSDPHLQTPMYFFLRNFSFLEISFTSVCIPRFLVTVVTGNRTISYNGCVAQLFFFIFLGVTEFYLLAAMSYDRCMAICKPLHYTIIMSTRVCTLLVFSSWLAGFLIIFPPVMLLLQLDFCASNVIDHFICDSSPMLQLSCTNTHFLELMAFFLAVVTLMVTLTLVILSYTNIIRTILKIPSMSQRKKAFSTCSSHMIVVSISYSSCIFMYIKTSARERVTLSKGVAVLNTSVAPLLNPFIYTLRNKQVKQAFKSMVQKMIFSLNK.

Topologically, residues Met-1–Val-23 are extracellular. The N-linked (GlcNAc...) asparagine glycan is linked to Asn-3. A helical transmembrane segment spans residues Val-24–Ile-44. Residues Thr-45–Asn-63 are Cytoplasmic-facing. The helical transmembrane segment at Phe-64–Val-84 threads the bilayer. Residues Thr-85–Cys-95 are Extracellular-facing. A disulfide bridge links Cys-95 with Cys-177. The chain crosses the membrane as a helical span at residues Val-96–Met-116. Residues Ser-117 to Thr-140 are Cytoplasmic-facing. Residues Leu-141–Leu-161 traverse the membrane as a helical segment. Topologically, residues Leu-162 to Glu-194 are extracellular. A helical membrane pass occupies residues Leu-195–Ser-215. At Tyr-216–Ser-237 the chain is on the cytoplasmic side. Residues Thr-238 to Ile-258 traverse the membrane as a helical segment. Residues Lys-259–Ser-269 are Extracellular-facing. Residues Lys-270–Leu-290 form a helical membrane-spanning segment. Residues Arg-291–Lys-312 are Cytoplasmic-facing.

The protein belongs to the G-protein coupled receptor 1 family.

The protein localises to the cell membrane. In terms of biological role, odorant receptor. The polypeptide is Olfactory receptor 6C75 (OR6C75) (Homo sapiens (Human)).